The chain runs to 284 residues: Probable endonuclease 4 (284 aa).

Residues H69, H113, E148, D182, H185, H217, D230, H232, and E262 each contribute to the Zn(2+) site.

The protein belongs to the AP endonuclease 2 family. The cofactor is Zn(2+).

The enzyme catalyses Endonucleolytic cleavage to 5'-phosphooligonucleotide end-products.. Endonuclease IV plays a role in DNA repair. It cleaves phosphodiester bonds at apurinic or apyrimidinic (AP) sites, generating a 3'-hydroxyl group and a 5'-terminal sugar phosphate. The polypeptide is Probable endonuclease 4 (Bifidobacterium longum subsp. infantis (strain ATCC 15697 / DSM 20088 / JCM 1222 / NCTC 11817 / S12)).